We begin with the raw amino-acid sequence, 354 residues long: MKFQVVLSALLACSSAVVASPIENLFKYRAVKASHSKNINSTLPAWNGSNSSNVTYANGTNSTTNTTTAESSQLQIIVTGGQVPITNSSLTHTNYTRLFNSSSALNITELYNVARVVNETIQDKSSAGAVVVANAKSLEAVSFFFSIIFDTEKPIVVTEDSAYAIPVANNKNATKRGVLSVTSDKLVYSGVFTPPTACSYGAGLPVAIVDDQDEVKWFFDASKPTLISSDSIIRKEYSNFTTPYGLLENGVPIVPIVYDGGYSSSLIDSLSSAVQGLVVVSSGSTNSTSSTIESTEIPVVYAQANTPLNFIDNKDVPKNAVGAGYLSPIKAQILLSIAAVNGVTSKSALESIFP.

Residues methionine 1 to alanine 19 form the signal peptide. Positions serine 20–lysine 37 are excised as a propeptide. N-linked (GlcNAc...) asparagine glycosylation is found at asparagine 40, asparagine 50, asparagine 53, asparagine 58, asparagine 61, asparagine 65, asparagine 87, asparagine 94, asparagine 100, asparagine 106, asparagine 118, asparagine 172, asparagine 239, and asparagine 286. Positions asparagine 50–proline 354 constitute an Asparaginase/glutaminase domain.

It to yeast sporulation-specific protein SPS100. Extensively N-glycosylated.

The protein resides in the secreted. Functionally, may be involved in cellular adaptations prior to stationary phase. This Saccharomyces cerevisiae (strain ATCC 204508 / S288c) (Baker's yeast) protein is Protein YGP1 (YGP1).